Reading from the N-terminus, the 486-residue chain is Ribulose bisphosphate carboxylase large chain (486 aa).

Positions 125 and 175 each coordinate substrate. Lysine 177 acts as the Proton acceptor in catalysis. Lysine 179 contributes to the substrate binding site. 3 residues coordinate Mg(2+): lysine 203, aspartate 205, and glutamate 206. Lysine 203 carries the N6-carboxylysine modification. Histidine 295 serves as the catalytic Proton acceptor. Residues arginine 296, histidine 328, and serine 380 each coordinate substrate.

It belongs to the RuBisCO large chain family. Type I subfamily. As to quaternary structure, heterohexadecamer of 8 large chains and 8 small chains. The cofactor is Mg(2+).

The catalysed reaction is 2 (2R)-3-phosphoglycerate + 2 H(+) = D-ribulose 1,5-bisphosphate + CO2 + H2O. The enzyme catalyses D-ribulose 1,5-bisphosphate + O2 = 2-phosphoglycolate + (2R)-3-phosphoglycerate + 2 H(+). In terms of biological role, ruBisCO catalyzes two reactions: the carboxylation of D-ribulose 1,5-bisphosphate, the primary event in carbon dioxide fixation, as well as the oxidative fragmentation of the pentose substrate. Both reactions occur simultaneously and in competition at the same active site. The sequence is that of Ribulose bisphosphate carboxylase large chain from Bradyrhizobium diazoefficiens (strain JCM 10833 / BCRC 13528 / IAM 13628 / NBRC 14792 / USDA 110).